Consider the following 311-residue polypeptide: ATP synthase subunit a (311 aa).

6 helical membrane passes run 62-82 (AVHV…GFIF), 123-143 (IAPM…MDLI), 170-190 (DPNA…MFSI), 213-233 (LWYL…VALI), 253-273 (IFIL…VGGV), and 276-296 (WAWA…FMVL).

It belongs to the ATPase A chain family. In terms of assembly, F-type ATPases have 2 components, CF(1) - the catalytic core - and CF(0) - the membrane proton channel. CF(1) has five subunits: alpha(3), beta(3), gamma(1), delta(1), epsilon(1). CF(0) has three main subunits: a(1), b(2) and c(9-12). The alpha and beta chains form an alternating ring which encloses part of the gamma chain. CF(1) is attached to CF(0) by a central stalk formed by the gamma and epsilon chains, while a peripheral stalk is formed by the delta and b chains.

Its subcellular location is the cell inner membrane. Key component of the proton channel; it plays a direct role in the translocation of protons across the membrane. This is ATP synthase subunit a from Saccharophagus degradans (strain 2-40 / ATCC 43961 / DSM 17024).